The primary structure comprises 471 residues: UDP-glycosyltransferase CGT (471 aa).

His-24 functions as the Proton acceptor in the catalytic mechanism. His-24 is a binding site for an anthocyanidin. The active-site Charge relay is the Asp-120. Thr-143 is a binding site for UDP-alpha-D-glucose. The segment at 280–281 (SR) is UDP. UDP-alpha-D-glucose-binding residues include Val-343, Gln-345, His-360, Trp-363, Asn-364, Ser-365, and Glu-368. Gly-383 serves as a coordination point for an anthocyanidin. Positions 384 and 385 each coordinate UDP-alpha-D-glucose.

The protein belongs to the UDP-glycosyltransferase family.

The catalysed reaction is a 3'-hydro-2'-hydroxy-beta-oxodihydrochalcone + UDP-alpha-D-glucose = a 3'-(beta-D-glucopyranosyl)-2'-hydroxy-beta-oxodihydrochalcone + UDP + H(+). Its function is as follows. UDP-glucose-dependent glucosyltransferase catalyzing the c-glucosylation of 2-hydroxyflavanones. Acts preferentially on the dibenzoylmethane tautomers formed in equilibrium with 2-hydroxyflavanones. No activity with naringenin or naringenin chalcone. The sequence is that of UDP-glycosyltransferase CGT from Oryza sativa subsp. indica (Rice).